Here is a 356-residue protein sequence, read N- to C-terminus: UDP-N-acetylglucosamine--N-acetylmuramyl-(pentapeptide) pyrophosphoryl-undecaprenol N-acetylglucosamine transferase (356 aa).

Residues 15–17, Asn-127, Arg-163, Ser-191, Ile-244, 263–268, and Gln-288 each bind UDP-N-acetyl-alpha-D-glucosamine; these read TGG and ALTVSE.

This sequence belongs to the glycosyltransferase 28 family. MurG subfamily.

It is found in the cell inner membrane. The catalysed reaction is di-trans,octa-cis-undecaprenyl diphospho-N-acetyl-alpha-D-muramoyl-L-alanyl-D-glutamyl-meso-2,6-diaminopimeloyl-D-alanyl-D-alanine + UDP-N-acetyl-alpha-D-glucosamine = di-trans,octa-cis-undecaprenyl diphospho-[N-acetyl-alpha-D-glucosaminyl-(1-&gt;4)]-N-acetyl-alpha-D-muramoyl-L-alanyl-D-glutamyl-meso-2,6-diaminopimeloyl-D-alanyl-D-alanine + UDP + H(+). It participates in cell wall biogenesis; peptidoglycan biosynthesis. In terms of biological role, cell wall formation. Catalyzes the transfer of a GlcNAc subunit on undecaprenyl-pyrophosphoryl-MurNAc-pentapeptide (lipid intermediate I) to form undecaprenyl-pyrophosphoryl-MurNAc-(pentapeptide)GlcNAc (lipid intermediate II). This Klebsiella pneumoniae (strain 342) protein is UDP-N-acetylglucosamine--N-acetylmuramyl-(pentapeptide) pyrophosphoryl-undecaprenol N-acetylglucosamine transferase.